We begin with the raw amino-acid sequence, 172 residues long: Type II secretion system protein H (172 aa).

The propeptide at 1-6 is leader sequence; it reads MRASRG. Phe-7 carries the post-translational modification N-methylphenylalanine. A helical transmembrane segment spans residues 7 to 27; that stretch reads FTLIELMVVMVIISVLIGLAV.

It belongs to the GSP H family. In terms of assembly, type II secretion is composed of four main components: the outer membrane complex, the inner membrane complex, the cytoplasmic secretion ATPase and the periplasm-spanning pseudopilus. Forms the tip of the type II pseudopilus by interacting with XcpV, XcpW and XcpX. Interacts with core component XcpT. Cleaved by prepilin peptidase. In terms of processing, methylated by prepilin peptidase at the amino group of the N-terminal phenylalanine once the leader sequence is cleaved by prepilin peptidase.

It is found in the cell inner membrane. Component of the type II secretion system required for the energy-dependent secretion of extracellular factors such as proteases and toxins from the periplasm. Part of the pseudopilus tip complex that is critical for the recognition and binding of secretion substrates. Type II pseudopilus confers increased bacterial adhesive capabilities. This Pseudomonas aeruginosa (strain ATCC 15692 / DSM 22644 / CIP 104116 / JCM 14847 / LMG 12228 / 1C / PRS 101 / PAO1) protein is Type II secretion system protein H (xcpU).